The primary structure comprises 403 residues: Leu/Ile/Val-binding protein homolog 8 (403 aa).

The first 26 residues, 1-26 (MRLSRLLIGASLGVALSSTVFTAALA), serve as a signal peptide directing secretion.

It belongs to the leucine-binding protein family.

In terms of biological role, component of an amino-acid transport system. This is Leu/Ile/Val-binding protein homolog 8 from Brucella abortus (strain 2308).